The primary structure comprises 321 residues: Methenyltetrahydromethanopterin cyclohydrolase (321 aa).

It belongs to the MCH family.

Its subcellular location is the cytoplasm. The catalysed reaction is 5,10-methenyl-5,6,7,8-tetrahydromethanopterin + H2O = N(5)-formyl-5,6,7,8-tetrahydromethanopterin + H(+). The protein operates within one-carbon metabolism; methanogenesis from CO(2); 5,10-methenyl-5,6,7,8-tetrahydromethanopterin from CO(2): step 3/3. Its function is as follows. Catalyzes the reversible interconversion of 5-formyl-H(4)MPT to methenyl-H(4)MPT(+). The sequence is that of Methenyltetrahydromethanopterin cyclohydrolase (mch) from Methanosarcina barkeri (strain Fusaro / DSM 804).